Here is a 617-residue protein sequence, read N- to C-terminus: MGKSLEWADLDYELQPWIKKAINVSGFDSMTPVQASTIPMFAKNKDVVVESVTGSGKTIAFVIPILEKIISEGINNSKFKKGHFYSLILAPTRELSMQIQNVVSSFLEHYPEDQYPIRSQLVVGTNEKSVRDDVNTLLDERPQILIGTPGRVLDFLQSPSVKTSSCGMVVLDEADRLLDVSFFKDVEKILNVLPKQRRTGLFSATISSAGTLIFKTGLRNPVKITVNSQGKNAPTTLNLFYSVMKPEEKLQNLIHIMNNIRFKKCIVYFSTCVSVTFFYQYLKYLQQTDKTLREDLQVISIHGKLTTQSRRKALSTFTESLSDCILLTTDVAARGIDIPDVDLVLQIDPPTDADIFLHRCGRTGRANKIGRAIVFLNEGREEDYIPFMEVKNVDIEETDINKNKISNDNNDEFYQRFTKWLLSDRANYDLSVKSYVAFIRYYSKHSATSIFRLQSLDYVSLGKMYGLFRLPRMPEITKYLQDKEKSGETVVGYYGEGWLMNPPPIDMDKYAYQDKKREKARIEELKNLAQINDKKKLKAELKKKNMAWSSKTMTKEERQERRKKLDLKRKAIELEIAAEAERDESDTEITQDWKDEILQKKKKKKVGSEMQGSFDDL.

The short motif at 7 to 35 (WADLDYELQPWIKKAINVSGFDSMTPVQA) is the Q motif element. In terms of domain architecture, Helicase ATP-binding spans 38-224 (IPMFAKNKDV…KTGLRNPVKI (187 aa)). ATP is bound at residue 51–58 (SVTGSGKT). The short motif at 172-175 (DEAD) is the DEAD box element. A Helicase C-terminal domain is found at 252-406 (NLIHIMNNIR…ETDINKNKIS (155 aa)).

It belongs to the DEAD box helicase family. DDX55/SPB4 subfamily. Component of pre-60S ribosomal complexes.

It localises to the nucleus. It is found in the nucleolus. It catalyses the reaction ATP + H2O = ADP + phosphate + H(+). In terms of biological role, ATP-binding RNA helicase involved in the biogenesis of 60S ribosomal subunits. Binds 90S pre-ribosomal particles and dissociates from pre-60S ribosomal particles after processing of 27SB pre-rRNA. Required for the normal formation of 18S rRNA through the processing of pre-rRNAs at sites A0, A1 and A2, and the normal formation of 25S and 5.8S rRNAs through the processing of pre-rRNAs at sites C1 and C2. This chain is ATP-dependent rRNA helicase SPB4, found in Candida glabrata (strain ATCC 2001 / BCRC 20586 / JCM 3761 / NBRC 0622 / NRRL Y-65 / CBS 138) (Yeast).